Here is a 405-residue protein sequence, read N- to C-terminus: Cystathionine gamma-lyase (405 aa).

The substrate site is built by Arg62, Tyr114, and Arg119. N6-(pyridoxal phosphate)lysine is present on Lys212. Glu339 is a substrate binding site.

The protein belongs to the trans-sulfuration enzymes family. Homotetramer. Interacts with CALM in a calcium-dependent manner. Pyridoxal 5'-phosphate is required as a cofactor.

Its subcellular location is the cytoplasm. The catalysed reaction is L,L-cystathionine + H2O = 2-oxobutanoate + L-cysteine + NH4(+). The protein operates within amino-acid biosynthesis; L-cysteine biosynthesis; L-cysteine from L-homocysteine and L-serine: step 2/2. Its function is as follows. Catalyzes the last step in the trans-sulfuration pathway from methionine to cysteine. Has broad substrate specificity. Converts cystathionine to cysteine, ammonia and 2-oxobutanoate. Converts two cysteine molecules to lanthionine and hydrogen sulfide. Can also accept homocysteine as substrate. Specificity depends on the levels of the endogenous substrates. Generates the endogenous signaling molecule hydrogen sulfide (H2S), and so contributes to the regulation of blood pressure. Acts as a cysteine-protein sulfhydrase by mediating sulfhydration of target proteins: sulfhydration consists of converting -SH groups into -SSH on specific cysteine residues of target proteins such as GAPDH, PTPN1 and NF-kappa-B subunit RELA, thereby regulating their function. The polypeptide is Cystathionine gamma-lyase (CTH) (Bos taurus (Bovine)).